We begin with the raw amino-acid sequence, 363 residues long: Probable butyrate kinase (363 aa).

It belongs to the acetokinase family.

It localises to the cytoplasm. The enzyme catalyses butanoate + ATP = butanoyl phosphate + ADP. The polypeptide is Probable butyrate kinase (Maridesulfovibrio salexigens (strain ATCC 14822 / DSM 2638 / NCIMB 8403 / VKM B-1763) (Desulfovibrio salexigens)).